Consider the following 167-residue polypeptide: NADH-ubiquinone oxidoreductase chain 6 (167 aa).

5 helical membrane passes run 1–21 (MVLM…VASN), 23–43 (SPYF…GMLM), 47–67 (MTFL…VVFA), 86–106 (VFSY…AFVG), and 133–153 (AGGY…LVVL).

This sequence belongs to the complex I subunit 6 family.

The protein resides in the mitochondrion membrane. The enzyme catalyses a ubiquinone + NADH + 5 H(+)(in) = a ubiquinol + NAD(+) + 4 H(+)(out). Core subunit of the mitochondrial membrane respiratory chain NADH dehydrogenase (Complex I) that is believed to belong to the minimal assembly required for catalysis. Complex I functions in the transfer of electrons from NADH to the respiratory chain. The immediate electron acceptor for the enzyme is believed to be ubiquinone. In Polypterus ornatipinnis (Ornate bichir), this protein is NADH-ubiquinone oxidoreductase chain 6 (MT-ND6).